A 296-amino-acid chain; its full sequence is Acetylglutamate kinase (296 aa).

Substrate is bound by residues 71-72 (GG), Arg-93, and Asn-186.

The protein belongs to the acetylglutamate kinase family. ArgB subfamily.

Its subcellular location is the cytoplasm. It catalyses the reaction N-acetyl-L-glutamate + ATP = N-acetyl-L-glutamyl 5-phosphate + ADP. Its pathway is amino-acid biosynthesis; L-arginine biosynthesis; N(2)-acetyl-L-ornithine from L-glutamate: step 2/4. In terms of biological role, catalyzes the ATP-dependent phosphorylation of N-acetyl-L-glutamate. This chain is Acetylglutamate kinase, found in Synechococcus sp. (strain RCC307).